Consider the following 124-residue polypeptide: Small ribosomal subunit protein uS12 (124 aa).

Residues 9-28 (RTERQTLSRKTKSPALRSCP) are disordered. Aspartate 89 is subject to 3-methylthioaspartic acid. A disordered region spans residues 104–124 (TAGVKDRRQSRSKYGAKAPKE).

Belongs to the universal ribosomal protein uS12 family. Part of the 30S ribosomal subunit. Contacts proteins S8 and S17. May interact with IF1 in the 30S initiation complex.

With S4 and S5 plays an important role in translational accuracy. Functionally, interacts with and stabilizes bases of the 16S rRNA that are involved in tRNA selection in the A site and with the mRNA backbone. Located at the interface of the 30S and 50S subunits, it traverses the body of the 30S subunit contacting proteins on the other side and probably holding the rRNA structure together. The combined cluster of proteins S8, S12 and S17 appears to hold together the shoulder and platform of the 30S subunit. The sequence is that of Small ribosomal subunit protein uS12 from Synechococcus sp. (strain RCC307).